The primary structure comprises 469 residues: Glutamate--tRNA ligase (469 aa).

Residues Pro9 to Gly19 carry the 'HIGH' region motif. Zn(2+) is bound by residues Cys98, Cys100, Cys125, and Asp127. Residues Lys236–Arg240 carry the 'KMSKS' region motif. Residue Lys239 participates in ATP binding.

The protein belongs to the class-I aminoacyl-tRNA synthetase family. Glutamate--tRNA ligase type 1 subfamily. Monomer. The cofactor is Zn(2+).

The protein resides in the cytoplasm. The catalysed reaction is tRNA(Glu) + L-glutamate + ATP = L-glutamyl-tRNA(Glu) + AMP + diphosphate. In terms of biological role, catalyzes the attachment of glutamate to tRNA(Glu) in a two-step reaction: glutamate is first activated by ATP to form Glu-AMP and then transferred to the acceptor end of tRNA(Glu). The sequence is that of Glutamate--tRNA ligase from Shewanella loihica (strain ATCC BAA-1088 / PV-4).